Consider the following 481-residue polypeptide: Aspartyl/glutamyl-tRNA(Asn/Gln) amidotransferase subunit B (481 aa).

The protein belongs to the GatB/GatE family. GatB subfamily. As to quaternary structure, heterotrimer of A, B and C subunits.

It catalyses the reaction L-glutamyl-tRNA(Gln) + L-glutamine + ATP + H2O = L-glutaminyl-tRNA(Gln) + L-glutamate + ADP + phosphate + H(+). It carries out the reaction L-aspartyl-tRNA(Asn) + L-glutamine + ATP + H2O = L-asparaginyl-tRNA(Asn) + L-glutamate + ADP + phosphate + 2 H(+). Its function is as follows. Allows the formation of correctly charged Asn-tRNA(Asn) or Gln-tRNA(Gln) through the transamidation of misacylated Asp-tRNA(Asn) or Glu-tRNA(Gln) in organisms which lack either or both of asparaginyl-tRNA or glutaminyl-tRNA synthetases. The reaction takes place in the presence of glutamine and ATP through an activated phospho-Asp-tRNA(Asn) or phospho-Glu-tRNA(Gln). This chain is Aspartyl/glutamyl-tRNA(Asn/Gln) amidotransferase subunit B, found in Carboxydothermus hydrogenoformans (strain ATCC BAA-161 / DSM 6008 / Z-2901).